The sequence spans 233 residues: Small ribosomal subunit protein uS2c (233 aa).

This sequence belongs to the universal ribosomal protein uS2 family.

Its subcellular location is the plastid. It localises to the apicoplast. The protein is Small ribosomal subunit protein uS2c of Toxoplasma gondii.